The sequence spans 314 residues: 4-hydroxy-3-methylbut-2-enyl diphosphate reductase (314 aa).

A [4Fe-4S] cluster-binding site is contributed by Cys12. Positions 41 and 74 each coordinate (2E)-4-hydroxy-3-methylbut-2-enyl diphosphate. Dimethylallyl diphosphate-binding residues include His41 and His74. Isopentenyl diphosphate-binding residues include His41 and His74. A [4Fe-4S] cluster-binding site is contributed by Cys96. Residue His124 coordinates (2E)-4-hydroxy-3-methylbut-2-enyl diphosphate. A dimethylallyl diphosphate-binding site is contributed by His124. His124 provides a ligand contact to isopentenyl diphosphate. The Proton donor role is filled by Glu126. Residue Thr167 participates in (2E)-4-hydroxy-3-methylbut-2-enyl diphosphate binding. A [4Fe-4S] cluster-binding site is contributed by Cys197. Positions 225, 226, 227, and 269 each coordinate (2E)-4-hydroxy-3-methylbut-2-enyl diphosphate. Positions 225, 226, 227, and 269 each coordinate dimethylallyl diphosphate. Isopentenyl diphosphate is bound by residues Ser225, Ser226, Asn227, and Ser269.

The protein belongs to the IspH family. [4Fe-4S] cluster serves as cofactor.

The catalysed reaction is isopentenyl diphosphate + 2 oxidized [2Fe-2S]-[ferredoxin] + H2O = (2E)-4-hydroxy-3-methylbut-2-enyl diphosphate + 2 reduced [2Fe-2S]-[ferredoxin] + 2 H(+). The enzyme catalyses dimethylallyl diphosphate + 2 oxidized [2Fe-2S]-[ferredoxin] + H2O = (2E)-4-hydroxy-3-methylbut-2-enyl diphosphate + 2 reduced [2Fe-2S]-[ferredoxin] + 2 H(+). Its pathway is isoprenoid biosynthesis; dimethylallyl diphosphate biosynthesis; dimethylallyl diphosphate from (2E)-4-hydroxy-3-methylbutenyl diphosphate: step 1/1. The protein operates within isoprenoid biosynthesis; isopentenyl diphosphate biosynthesis via DXP pathway; isopentenyl diphosphate from 1-deoxy-D-xylulose 5-phosphate: step 6/6. Functionally, catalyzes the conversion of 1-hydroxy-2-methyl-2-(E)-butenyl 4-diphosphate (HMBPP) into a mixture of isopentenyl diphosphate (IPP) and dimethylallyl diphosphate (DMAPP). Acts in the terminal step of the DOXP/MEP pathway for isoprenoid precursor biosynthesis. In Actinobacillus pleuropneumoniae serotype 7 (strain AP76), this protein is 4-hydroxy-3-methylbut-2-enyl diphosphate reductase.